Consider the following 244-residue polypeptide: Biosynthetic peptidoglycan transglycosylase (244 aa).

Residues 25-45 form a helical membrane-spanning segment; the sequence is LLLLLTAALLYQSWFLLHIVY.

It belongs to the glycosyltransferase 51 family.

The protein resides in the cell inner membrane. The enzyme catalyses [GlcNAc-(1-&gt;4)-Mur2Ac(oyl-L-Ala-gamma-D-Glu-L-Lys-D-Ala-D-Ala)](n)-di-trans,octa-cis-undecaprenyl diphosphate + beta-D-GlcNAc-(1-&gt;4)-Mur2Ac(oyl-L-Ala-gamma-D-Glu-L-Lys-D-Ala-D-Ala)-di-trans,octa-cis-undecaprenyl diphosphate = [GlcNAc-(1-&gt;4)-Mur2Ac(oyl-L-Ala-gamma-D-Glu-L-Lys-D-Ala-D-Ala)](n+1)-di-trans,octa-cis-undecaprenyl diphosphate + di-trans,octa-cis-undecaprenyl diphosphate + H(+). It functions in the pathway cell wall biogenesis; peptidoglycan biosynthesis. In terms of biological role, peptidoglycan polymerase that catalyzes glycan chain elongation from lipid-linked precursors. This is Biosynthetic peptidoglycan transglycosylase from Nitrosomonas europaea (strain ATCC 19718 / CIP 103999 / KCTC 2705 / NBRC 14298).